The following is a 341-amino-acid chain: Probable long-chain-alcohol O-fatty-acyltransferase 1 (341 aa).

The next 8 helical transmembrane spans lie at 7 to 27 (NLIE…YISS), 36 to 56 (LLSI…LSCV), 58 to 78 (FCAI…LLFA), 120 to 140 (PMPK…LHVY), 149 to 169 (FVVL…VLVF), 233 to 253 (MFAG…LLYF), 261 to 281 (TWEV…EIAV), and 293 to 313 (AVSG…LFLA).

It belongs to the wax synthase family.

Its subcellular location is the membrane. It carries out the reaction a long chain fatty alcohol + a fatty acyl-CoA = a wax ester + CoA. Its function is as follows. Catalyzes the final step in the synthesis of long-chain linear esters (waxes). The protein is Probable long-chain-alcohol O-fatty-acyltransferase 1 (AT1) of Arabidopsis thaliana (Mouse-ear cress).